Here is a 90-residue protein sequence, read N- to C-terminus: Small ribosomal subunit protein bS20 (90 aa).

Belongs to the bacterial ribosomal protein bS20 family.

Functionally, binds directly to 16S ribosomal RNA. The sequence is that of Small ribosomal subunit protein bS20 from Desulfitobacterium hafniense (strain DSM 10664 / DCB-2).